Here is a 368-residue protein sequence, read N- to C-terminus: Trans-enoyl reductase TwmE (368 aa).

NADP(+) is bound at residue 49 to 52 (SDYK). 135-142 (FKAATLGT) contacts substrate. NADP(+)-binding positions include 204–207 (SPRS), Tyr222, and 269–270 (LE). 290–294 (SAELY) contacts substrate. 360–361 (HP) serves as a coordination point for NADP(+).

It belongs to the zinc-containing alcohol dehydrogenase family. In terms of assembly, monomer.

It functions in the pathway secondary metabolite biosynthesis. Its function is as follows. Trans-enoyl reductase; part of the gene cluster that mediates the biosynthesis of wortmanamides A and B, reduced long-chain polyketides amidated with a specific omega-amino acid, 5-aminopentanoic acid (5PA). The PKS modules of TwmB are involved in the synthesis of the polyketide backbone, whereas the non-canonical C domain of TwmB is a bonafide condensation domain that specifically selects 5PA and catalyzes amidation to release polyketide chain. The C domain clearly prefers C16 and C18 fatty acyl substrates, which is consistent with simultaneous formation of both octaketide and nonaketide acyl amides wortmanamides A and B. Because TwmB lacks a designated enoylreductase (ER) domain, the required activity is provided the enoyl reductase TwmE. The roles of the remaining enzymes have still to be clarified. The polypeptide is Trans-enoyl reductase TwmE (Talaromyces wortmannii (Penicillium wortmannii)).